The following is a 554-amino-acid chain: MAAAPAALALDPQPQEEQKDASESSELSRLRAELAGALAEMETMKAVAEVSESTKAEAVAAVQRQCQEEVASLQAILKDSISSYETQIAALKQERQQQQQDSEEKERELGHLKQLLARAHPLDSLEKQMEKAHEDSEKLREIVLPMEQEIAELKVKLLRAEELIQEIQRRPRQPASLHGSTELLPLSRNPSPPLEPSEEPSGDAGPAAEAFAHNCDDSASISSFSLGGAAGSVSLRGPQGLSPEQEETASLVSTGTLVPEGIYLPPPGYQLVPDSQWEQLQVEGRQLQKELESVRRERDELQEGLSRSNEDCAKQMQVLLAQVQNSEQLLRTLQGTVSQAQERVQRQMAELATSHKCLSQEVKRLNEENRGLRAEQLPSSALQGSEQQEDQDEALPSSIQELHQLVRHTRQQARARQQAQEHEAERLRIEIVKLREALDEETAAKASLEGQLRVQREETDVLEASLCSLRIETERVQQEHHKAQLTDLLSEQRAKALRLQAELETSEQVQRDFVRLSQALQVRLEQIRQADTLEQVRSILDEAPLRDIKDIKDS.

Residues 1–15 show a composition bias toward low complexity; it reads MAAAPAALALDPQPQ. Disordered regions lie at residues 1-29, 167-250, and 375-395; these read MAAAPAALALDPQPQEEQKDASESSELSR, IQRR…ETAS, and EQLPSSALQGSEQQEDQDEAL. Residues 15–173 adopt a coiled-coil conformation; sequence QEEQKDASES…IQEIQRRPRQ (159 aa). The span at 16-29 shows a compositional bias: basic and acidic residues; that stretch reads EEQKDASESSELSR. Ser176, Ser180, Ser187, and Ser191 each carry phosphoserine. The stretch at 274 to 512 forms a coiled coil; it reads DSQWEQLQVE…LETSEQVQRD (239 aa). Residues 377–386 show a composition bias toward polar residues; it reads LPSSALQGSE.

The protein belongs to the rabaptin family. Heterodimer with RABGEF1. The dimer binds RAB5A that has been activated by GTP-binding. Interacts with SDCCAG8; this interaction is important for ciliogenesis regulation. Interacts with RAB4A; this interaction may mediate VEGFR2 cell surface expression.

The protein localises to the cytoplasm. The protein resides in the early endosome. Its subcellular location is the cytoskeleton. It is found in the microtubule organizing center. It localises to the centrosome. The protein localises to the cilium basal body. Its function is as follows. Plays a role in membrane trafficking and in homotypic early endosome fusion. Participates in arteriogenesis by regulating vascular endothelial growth factor receptor 2/VEGFR2 cell surface expression and endosomal trafficking. By interacting with SDCCAG8, localizes to centrosomes and plays a critical role in ciliogenesis. The polypeptide is Rab GTPase-binding effector protein 2 (Rabep2) (Rattus norvegicus (Rat)).